A 181-amino-acid chain; its full sequence is Putative ankyrin repeat protein RBE_0150 (181 aa).

ANK repeat units lie at residues 50–79, 83–114, 118–147, and 151–180; these read IGQK…KLGT, LGRT…DINA, SGST…DYFT, and LGQT…AGYY.

In Rickettsia bellii (strain RML369-C), this protein is Putative ankyrin repeat protein RBE_0150.